The following is a 358-amino-acid chain: Trans-anol O-methyltransferase 1 (358 aa).

Residues G201, D224, D244, M245, and R259 each coordinate S-adenosyl-L-methionine. Catalysis depends on H262, which acts as the Proton acceptor.

This sequence belongs to the class I-like SAM-binding methyltransferase superfamily. Cation-independent O-methyltransferase family. COMT subfamily. As to expression, highly expressed in developing fruits. Expressed at low levels in roots, young leaves, buds and flowers.

It carries out the reaction (E)-anol + S-adenosyl-L-methionine = (E)-anethole + S-adenosyl-L-homocysteine + H(+). It catalyses the reaction (E)-isoeugenol + S-adenosyl-L-methionine = (E)-isomethyleugenol + S-adenosyl-L-homocysteine + H(+). The protein operates within aromatic compound metabolism; phenylpropanoid biosynthesis. Inhibited by zinc and copper. In terms of biological role, phenylpropene O-methyltransferase that catalyzes the conversion of trans-anol to trans-anethole and isoeugenol to isomethyleugenol. Phenylpropenes are the primary constituents of various essential plant oils. They are produced as antimicrobial and antianimal compounds, or as floral attractants of pollinators. The polypeptide is Trans-anol O-methyltransferase 1 (AIMT1) (Pimpinella anisum (Anise)).